The chain runs to 329 residues: Transmembrane protein I329L (329 aa).

Residues 1 to 31 form the signal peptide; the sequence is MLRVFIFFVFLGSGLTGRIKPQVTCKYFISE. Asparagine 32, asparagine 39, asparagine 44, asparagine 76, asparagine 82, and asparagine 101 each carry an N-linked (GlcNAc...) asparagine; by host glycan. At 32–239 the chain is on the extracellular side; it reads NNTWYKYNVT…NTERYKSCYP (208 aa). An LRR repeat occupies 112–133; the sequence is ELKFLDLRYNDLQVIDYNILRK. N-linked (GlcNAc...) asparagine; by host glycosylation is found at asparagine 185 and asparagine 219. Cysteine 195 and cysteine 237 are oxidised to a cystine. The helical transmembrane segment at 240–260 threads the bilayer; it reads LVFISILCSCISFLFLFICLL. At 261–329 the chain is on the cytoplasmic side; it reads RSICKKYSCT…EKKVSCSRRK (69 aa).

This sequence belongs to the asfivirus I329L family. Highly glycosylated.

The protein resides in the host endoplasmic reticulum membrane. It localises to the host Golgi apparatus membrane. Viral TLR3 homolog that probably prevents TLR3 dimerization and subsequent induction of IFN. Inhibits dsRNA-stimulated activation of NF-kB and IRF3. This Ornithodoros (relapsing fever ticks) protein is Transmembrane protein I329L.